A 91-amino-acid chain; its full sequence is Large ribosomal subunit protein uL23c (91 aa).

The protein belongs to the universal ribosomal protein uL23 family. In terms of assembly, part of the 50S ribosomal subunit.

It is found in the plastid. The protein resides in the chloroplast. Functionally, binds to 23S rRNA. This chain is Large ribosomal subunit protein uL23c (rpl23), found in Pinus koraiensis (Korean pine).